The following is a 443-amino-acid chain: Cobyrinate a,c-diamide synthase (443 aa).

A GATase cobBQ-type domain is found at 244–435; sequence KVSVAMDSAF…AHIHFLSNPR (192 aa). C327 (nucleophile) is an active-site residue.

This sequence belongs to the CobB/CbiA family. The cofactor is Mg(2+).

The catalysed reaction is cob(II)yrinate + 2 L-glutamine + 2 ATP + 2 H2O = cob(II)yrinate a,c diamide + 2 L-glutamate + 2 ADP + 2 phosphate + 2 H(+). Its pathway is cofactor biosynthesis; adenosylcobalamin biosynthesis; cob(II)yrinate a,c-diamide from sirohydrochlorin (anaerobic route): step 10/10. In terms of biological role, catalyzes the ATP-dependent amidation of the two carboxylate groups at positions a and c of cobyrinate, using either L-glutamine or ammonia as the nitrogen source. In Thermoplasma acidophilum (strain ATCC 25905 / DSM 1728 / JCM 9062 / NBRC 15155 / AMRC-C165), this protein is Cobyrinate a,c-diamide synthase.